The chain runs to 219 residues: Thiamine-phosphate synthase (219 aa).

4-amino-2-methyl-5-(diphosphooxymethyl)pyrimidine contacts are provided by residues 44–48 (QFREK) and asparagine 79. The Mg(2+) site is built by aspartate 80 and aspartate 99. Residue serine 117 coordinates 4-amino-2-methyl-5-(diphosphooxymethyl)pyrimidine. 143 to 145 (TST) contributes to the 2-[(2R,5Z)-2-carboxy-4-methylthiazol-5(2H)-ylidene]ethyl phosphate binding site. Position 146 (lysine 146) interacts with 4-amino-2-methyl-5-(diphosphooxymethyl)pyrimidine. Residues glycine 175 and 195 to 196 (IS) contribute to the 2-[(2R,5Z)-2-carboxy-4-methylthiazol-5(2H)-ylidene]ethyl phosphate site.

This sequence belongs to the thiamine-phosphate synthase family. Mg(2+) is required as a cofactor.

The enzyme catalyses 2-[(2R,5Z)-2-carboxy-4-methylthiazol-5(2H)-ylidene]ethyl phosphate + 4-amino-2-methyl-5-(diphosphooxymethyl)pyrimidine + 2 H(+) = thiamine phosphate + CO2 + diphosphate. It carries out the reaction 2-(2-carboxy-4-methylthiazol-5-yl)ethyl phosphate + 4-amino-2-methyl-5-(diphosphooxymethyl)pyrimidine + 2 H(+) = thiamine phosphate + CO2 + diphosphate. The catalysed reaction is 4-methyl-5-(2-phosphooxyethyl)-thiazole + 4-amino-2-methyl-5-(diphosphooxymethyl)pyrimidine + H(+) = thiamine phosphate + diphosphate. The protein operates within cofactor biosynthesis; thiamine diphosphate biosynthesis; thiamine phosphate from 4-amino-2-methyl-5-diphosphomethylpyrimidine and 4-methyl-5-(2-phosphoethyl)-thiazole: step 1/1. Its function is as follows. Condenses 4-methyl-5-(beta-hydroxyethyl)thiazole monophosphate (THZ-P) and 2-methyl-4-amino-5-hydroxymethyl pyrimidine pyrophosphate (HMP-PP) to form thiamine monophosphate (TMP). This is Thiamine-phosphate synthase from Bacillus cereus (strain B4264).